Here is a 368-residue protein sequence, read N- to C-terminus: 1-deoxy-D-xylulose 5-phosphate reductoisomerase (368 aa).

NADPH contacts are provided by threonine 7, glycine 8, serine 9, isoleucine 10, glycine 31, lysine 32, asparagine 33, and asparagine 113. Residue lysine 114 coordinates 1-deoxy-D-xylulose 5-phosphate. Residue glutamate 115 participates in NADPH binding. Aspartate 133 is a binding site for Mn(2+). Positions 134, 135, 158, and 181 each coordinate 1-deoxy-D-xylulose 5-phosphate. Residue glutamate 135 coordinates Mn(2+). NADPH is bound at residue glycine 187. 1-deoxy-D-xylulose 5-phosphate is bound by residues serine 194, asparagine 199, lysine 200, and glutamate 203. Glutamate 203 serves as a coordination point for Mn(2+).

Belongs to the DXR family. Mg(2+) serves as cofactor. It depends on Mn(2+) as a cofactor.

It catalyses the reaction 2-C-methyl-D-erythritol 4-phosphate + NADP(+) = 1-deoxy-D-xylulose 5-phosphate + NADPH + H(+). Its pathway is isoprenoid biosynthesis; isopentenyl diphosphate biosynthesis via DXP pathway; isopentenyl diphosphate from 1-deoxy-D-xylulose 5-phosphate: step 1/6. Its function is as follows. Catalyzes the NADPH-dependent rearrangement and reduction of 1-deoxy-D-xylulose-5-phosphate (DXP) to 2-C-methyl-D-erythritol 4-phosphate (MEP). The protein is 1-deoxy-D-xylulose 5-phosphate reductoisomerase of Helicobacter pylori (strain HPAG1).